A 1091-amino-acid chain; its full sequence is Self-sufficient cytochrome P450 monooxygenase CYP505E1 (1091 aa).

C433 contacts heme. Residues 528-669 (ICFFYGSNSG…DLEAWEETSL (142 aa)) form the Flavodoxin-like domain. Residues 534-538 (SNSGT) and 613-645 (VFGCGHHDWTQTFYRIPTLIDELMHKAGATRLA) contribute to the FMN site. Positions 707–935 (KDLMEARVTT…RPAKEAFHLP (229 aa)) constitute an FAD-binding FR-type domain.

The protein in the N-terminal section; belongs to the cytochrome P450 family. The cofactor is FAD. FMN is required as a cofactor. It depends on heme as a cofactor.

The catalysed reaction is 2 oxidized [cytochrome P450] + NADPH = 2 reduced [cytochrome P450] + NADP(+) + H(+). It carries out the reaction an organic molecule + reduced [NADPH--hemoprotein reductase] + O2 = an alcohol + oxidized [NADPH--hemoprotein reductase] + H2O + H(+). It catalyses the reaction dodecanoate + reduced [NADPH--hemoprotein reductase] + O2 = 5-hydroxydodecanoate + oxidized [NADPH--hemoprotein reductase] + H2O + H(+). The enzyme catalyses tetradecanoate + reduced [NADPH--hemoprotein reductase] + O2 = 7-hydroxytetradecanoate + oxidized [NADPH--hemoprotein reductase] + H2O + H(+). The catalysed reaction is dodecan-1-ol + reduced [NADPH--hemoprotein reductase] + O2 = 1,5-dodecanediol + oxidized [NADPH--hemoprotein reductase] + H2O + H(+). It carries out the reaction dodecan-1-ol + reduced [NADPH--hemoprotein reductase] + O2 = 1,4-dodecanediol + oxidized [NADPH--hemoprotein reductase] + H2O + H(+). It catalyses the reaction dodecan-1-ol + reduced [NADPH--hemoprotein reductase] + O2 = 1,6-dodecanediol + oxidized [NADPH--hemoprotein reductase] + H2O + H(+). Self-sufficient cytochrome P450 monooxygenase that catalyzes the regioselective in-chain hydroxylation of alkanes, fatty alcohols, and fatty acids at the omega-7 position. Performs hydroxylation of C10-C16 n-alkanes and C12 and C14 fatty alcohols; and thereby enables the one step biocatalytic synthesis of rare alcohols such as 5-dodecanol and 7-tetradecanol. Converts 1-dodecanol into 1,5-dodecanediol as major product with very little sub-terminally hydroxylated products with the 1,4-dodecanediol and 1,6-dodecanediol more abundant. Converts dodecanoic acid to 5-hydroxydodecanoic acid which can be further converted into delta-dodecalactone by lactonization of the 5-hydroxy acid at low pH. Also gives sub-terminal hydroxylation of dodecanoic acid with 9-hydroxydodecanoic acid being the second most abundant product. This chain is Self-sufficient cytochrome P450 monooxygenase CYP505E1, found in Aspergillus niger (strain ATCC MYA-4892 / CBS 513.88 / FGSC A1513).